The primary structure comprises 433 residues: 26S proteasome regulatory subunit 7 (433 aa).

The interval 1–22 is disordered; the sequence is MPDYLGADQRKTKEDEKDDKPI. Residues 8–22 show a composition bias toward basic and acidic residues; the sequence is DQRKTKEDEKDDKPI. K116 is subject to N6-acetyllysine. Residue 216–223 participates in ATP binding; that stretch reads GPPGTGKT. N6-acetyllysine is present on K422.

It belongs to the AAA ATPase family. Component of the 19S proteasome regulatory particle complex. The 26S proteasome consists of a 20S core particle (CP) and two 19S regulatory subunits (RP). The regulatory particle is made of a lid composed of 9 subunits, a base containing 6 ATPases including PSMC2 and few additional components. Interacts with NDC80 and SQSTM1. Interacts with PAAF1. Interacts with TRIM5. In terms of processing, monoubiquitinated by RNF181. Phosphorylated. Dephosphorylated by UBLCP1 which impairs PSMC2 ATPase activity and disrupts 26S proteasome assembly.

The protein resides in the cytoplasm. In terms of biological role, component of the 26S proteasome, a multiprotein complex involved in the ATP-dependent degradation of ubiquitinated proteins. This complex plays a key role in the maintenance of protein homeostasis by removing misfolded or damaged proteins, which could impair cellular functions, and by removing proteins whose functions are no longer required. Therefore, the proteasome participates in numerous cellular processes, including cell cycle progression, apoptosis, or DNA damage repair. PSMC2 belongs to the heterohexameric ring of AAA (ATPases associated with diverse cellular activities) proteins that unfolds ubiquitinated target proteins that are concurrently translocated into a proteolytic chamber and degraded into peptides. This Rattus norvegicus (Rat) protein is 26S proteasome regulatory subunit 7 (Psmc2).